Reading from the N-terminus, the 530-residue chain is NADH-quinone oxidoreductase subunit C/D (530 aa).

Residues 1 to 144 (MQEIQFIVPA…NPLCMANEET (144 aa)) form an NADH dehydrogenase I subunit C region. Residues 171 to 530 (EYVVNIGPQH…LDYVVPDIDR (360 aa)) are NADH dehydrogenase I subunit D.

The protein in the N-terminal section; belongs to the complex I 30 kDa subunit family. In the C-terminal section; belongs to the complex I 49 kDa subunit family. NDH-1 is composed of 13 different subunits. Subunits NuoB, CD, E, F, and G constitute the peripheral sector of the complex.

The protein resides in the cell inner membrane. The catalysed reaction is a quinone + NADH + 5 H(+)(in) = a quinol + NAD(+) + 4 H(+)(out). Functionally, NDH-1 shuttles electrons from NADH, via FMN and iron-sulfur (Fe-S) centers, to quinones in the respiratory chain. The immediate electron acceptor for the enzyme in this species is believed to be a menaquinone. Couples the redox reaction to proton translocation (for every two electrons transferred, four hydrogen ions are translocated across the cytoplasmic membrane), and thus conserves the redox energy in a proton gradient. The sequence is that of NADH-quinone oxidoreductase subunit C/D from Bacteroides thetaiotaomicron (strain ATCC 29148 / DSM 2079 / JCM 5827 / CCUG 10774 / NCTC 10582 / VPI-5482 / E50).